Here is a 190-residue protein sequence, read N- to C-terminus: Succinate dehydrogenase assembly factor 2, mitochondrial (190 aa).

It belongs to the SDHAF2 family. In terms of assembly, interacts with the flavoprotein subunit within the SDH catalytic dimer.

Its subcellular location is the mitochondrion matrix. Plays an essential role in the assembly of succinate dehydrogenase (SDH), an enzyme complex (also referred to as respiratory complex II) that is a component of both the tricarboxylic acid (TCA) cycle and the mitochondrial electron transport chain, and which couples the oxidation of succinate to fumarate with the reduction of ubiquinone (coenzyme Q) to ubiquinol. Required for flavinylation (covalent attachment of FAD) of the flavoprotein subunit of the SDH catalytic dimer. In Komagataella phaffii (strain GS115 / ATCC 20864) (Yeast), this protein is Succinate dehydrogenase assembly factor 2, mitochondrial.